The following is a 50-amino-acid chain: Protein PsbN (50 aa).

Residues Ile-14 to Phe-34 form a helical membrane-spanning segment.

It belongs to the PsbN family.

The protein localises to the cellular thylakoid membrane. May play a role in photosystem I and II biogenesis. This is Protein PsbN from Prochlorococcus marinus (strain MIT 9215).